A 190-amino-acid polypeptide reads, in one-letter code: Casparian strip membrane protein 1 (190 aa).

The Cytoplasmic segment spans residues 1–24; that stretch reads MKAESGSADAKLPLPPPVGRKRRG. Residues 25–45 form a helical membrane-spanning segment; the sequence is LAILDFLLRLLAIGATLSAAI. Residues 46–72 lie on the Extracellular side of the membrane; that stretch reads AMGTNNETLKFFTQFFQFNARFYNLSA. N-linked (GlcNAc...) asparagine glycans are attached at residues asparagine 51 and asparagine 69. A helical transmembrane segment spans residues 73–93; that stretch reads FIYFVIANATVGLYLLLSLPF. Over 94–107 the chain is Cytoplasmic; it reads SIFDIVRPRAAAFR. The helical transmembrane segment at 108–128 threads the bilayer; that stretch reads VLLIFFDTVMVAVCTSGAAAA. Residues 129-157 are Extracellular-facing; the sequence is TAIMYVARRGNTKTNWFSICQQFNSFCDQ. Residues 158–178 traverse the membrane as a helical segment; it reads ATGALGASFAAVVLLILLVLL. Residues 179-190 lie on the Cytoplasmic side of the membrane; it reads SASTLHRQRADF.

Belongs to the Casparian strip membrane proteins (CASP) family. In terms of assembly, homodimer and heterodimers.

The protein localises to the cell membrane. Functionally, regulates membrane-cell wall junctions and localized cell wall deposition. Required for establishment of the Casparian strip membrane domain (CSD) and the subsequent formation of Casparian strips, a cell wall modification of the root endodermis that determines an apoplastic barrier between the intraorganismal apoplasm and the extraorganismal apoplasm and prevents lateral diffusion. This Pinus taeda (Loblolly pine) protein is Casparian strip membrane protein 1.